The following is a 453-amino-acid chain: Tol-Pal system protein TolB (453 aa).

The signal sequence occupies residues 1–31; sequence MINNLSVSMTKVLKIILTIIIILFNTLSILA.

Belongs to the TolB family. In terms of assembly, the Tol-Pal system is composed of five core proteins: the inner membrane proteins TolA, TolQ and TolR, the periplasmic protein TolB and the outer membrane protein Pal. They form a network linking the inner and outer membranes and the peptidoglycan layer.

It is found in the periplasm. Functionally, part of the Tol-Pal system, which plays a role in outer membrane invagination during cell division and is important for maintaining outer membrane integrity. This is Tol-Pal system protein TolB from Orientia tsutsugamushi (strain Boryong) (Rickettsia tsutsugamushi).